Reading from the N-terminus, the 446-residue chain is Tetratricopeptide repeat protein 23 (446 aa).

TPR repeat units follow at residues 45-78, 137-170, 186-219, and 356-389; these read LHLC…TKIC, LELF…SKEM, SRIK…TETT, and AETY…ETFL.

As to quaternary structure, associated with the EvC complex composed of EFCAB7, IQCE, EVC2 and EVC.

The protein resides in the cell projection. The protein localises to the cilium. Its function is as follows. Participates positively in the ciliary Hedgehog (Hh) signaling. In Rattus norvegicus (Rat), this protein is Tetratricopeptide repeat protein 23 (Ttc23).